A 151-amino-acid chain; its full sequence is Prefoldin subunit 5 (151 aa).

A coiled-coil region spans residues 15–35 (IDQLKALKEQADLEVNLLQDS).

Belongs to the prefoldin subunit alpha family. As to quaternary structure, heterohexamer of two PFD-alpha type and four PFD-beta type subunits forming prefoldin co-chaperone complex. Interacts with PFD6. Binds to the DELLA protein GAI.

It is found in the cytoplasm. The protein resides in the nucleus. Functionally, binds specifically to cytosolic chaperonin (c-CPN) and transfers target proteins to it. Binds to nascent polypeptide chain and promotes folding in an environment in which there are many competing pathways for nonnative proteins. Together with other chaperonins, contribute to the regulation of gene expression by modulating the spliceosome function on pre-mRNA splicing post-transcriptionally by acting as a co-chaperone of Hsp90 to control levels of LSM8. Required for the biogenesis of tubulins and for subsequent microtubules (MTs) organization and dynamicity. Necessary for tolerance to NaCl salt stress. Involved in the process leading to microtubules dissociation in response to gibberellic acid (GA) probably due to the DELLA proteins-mediated translocation of the prefoldin co-chaperone complex from the cytoplasm to the nucleus. Prevents cold acclimation (e.g. 7 days at 4 degrees Celsius) in a DELLA proteins-dependent manner by promoting nuclear proteasome-mediated HY5 degradation, thus modulating the expression of several genes and reducing anthocyanin biosynthesis, but seems not involved in constitutive freezing tolerance. Contributes to the GA-dependent regulation of PIN2 trafficking at the plasma membrane, thus influencing auxin flux. This chain is Prefoldin subunit 5, found in Arabidopsis thaliana (Mouse-ear cress).